Reading from the N-terminus, the 448-residue chain is Extracellular serine protease (448 aa).

Positions 1–20 (MKLSHLSLAIISAITLAACG) are cleaved as a signal peptide. Residues 87–109 (KELENQASDDEVDPTKTGVVGNL) form a disordered region.

Belongs to the peptidase S17 family. A divalent metal cation is required as a cofactor.

Its function is as follows. This enzyme is a chymotrypsin-like serine protease. Degrades a variety of substrates present in the skin and hoof of the sheep, including elastin, keratin, fibrinogen and collagen. It seems to play an important role in the pathogenesis of sheep footrot. The chain is Extracellular serine protease (prvA) from Dichelobacter nodosus (Bacteroides nodosus).